The sequence spans 90 residues: UPF0329 protein ECU04_1650 (90 aa).

Belongs to the UPF0329 family.

The polypeptide is UPF0329 protein ECU04_1650 (Encephalitozoon cuniculi (strain GB-M1) (Microsporidian parasite)).